The primary structure comprises 467 residues: UPF0236 protein TTE0033/TTE0744/TTE0838/TTE0852/TTE1082/TTE1247/TTE1519/TTE1678/TTE1739/TTE1823/TTE2212 (467 aa).

This sequence belongs to the UPF0236 family.

This chain is UPF0236 protein TTE0033/TTE0744/TTE0838/TTE0852/TTE1082/TTE1247/TTE1519/TTE1678/TTE1739/TTE1823/TTE2212, found in Caldanaerobacter subterraneus subsp. tengcongensis (strain DSM 15242 / JCM 11007 / NBRC 100824 / MB4) (Thermoanaerobacter tengcongensis).